The chain runs to 217 residues: UPF0502 protein Smlt0097 (217 aa).

This sequence belongs to the UPF0502 family.

This Stenotrophomonas maltophilia (strain K279a) protein is UPF0502 protein Smlt0097.